Consider the following 170-residue polypeptide: Probable inosine/xanthosine triphosphatase (170 aa).

7 to 12 lines the substrate pocket; that stretch reads TTNPVK. Asp37 is a binding site for Mg(2+).

This sequence belongs to the YjjX NTPase family. Homodimer. Requires Mg(2+) as cofactor. The cofactor is Mn(2+).

The enzyme catalyses XTP + H2O = XDP + phosphate + H(+). It catalyses the reaction ITP + H2O = IDP + phosphate + H(+). Its function is as follows. Phosphatase that hydrolyzes non-canonical purine nucleotides such as XTP and ITP to their respective diphosphate derivatives. Probably excludes non-canonical purines from DNA/RNA precursor pool, thus preventing their incorporation into DNA/RNA and avoiding chromosomal lesions. This Methanopyrus kandleri (strain AV19 / DSM 6324 / JCM 9639 / NBRC 100938) protein is Probable inosine/xanthosine triphosphatase.